The chain runs to 276 residues: Dermonecrotic toxin LsaSicTox-alphaIB2iii (276 aa).

His5 is a catalytic residue. Positions 25 and 27 each coordinate Mg(2+). His41 functions as the Nucleophile in the catalytic mechanism. 2 disulfide bridges follow: Cys45–Cys51 and Cys47–Cys190. Asp85 contributes to the Mg(2+) binding site. Residues Asn129 and Asn253 are each glycosylated (N-linked (GlcNAc...) asparagine).

It belongs to the arthropod phospholipase D family. Class II subfamily. Mg(2+) serves as cofactor. In terms of tissue distribution, expressed by the venom gland.

The protein localises to the secreted. It catalyses the reaction an N-(acyl)-sphingosylphosphocholine = an N-(acyl)-sphingosyl-1,3-cyclic phosphate + choline. The catalysed reaction is an N-(acyl)-sphingosylphosphoethanolamine = an N-(acyl)-sphingosyl-1,3-cyclic phosphate + ethanolamine. It carries out the reaction a 1-acyl-sn-glycero-3-phosphocholine = a 1-acyl-sn-glycero-2,3-cyclic phosphate + choline. The enzyme catalyses a 1-acyl-sn-glycero-3-phosphoethanolamine = a 1-acyl-sn-glycero-2,3-cyclic phosphate + ethanolamine. Functionally, dermonecrotic toxins cleave the phosphodiester linkage between the phosphate and headgroup of certain phospholipids (sphingolipid and lysolipid substrates), forming an alcohol (often choline) and a cyclic phosphate. This toxin acts on sphingomyelin (SM). It may also act on ceramide phosphoethanolamine (CPE), lysophosphatidylcholine (LPC) and lysophosphatidylethanolamine (LPE), but not on lysophosphatidylserine (LPS), and lysophosphatidylglycerol (LPG). It acts by transphosphatidylation, releasing exclusively cyclic phosphate products as second products. Induces dermonecrosis, hemolysis, increased vascular permeability, edema, inflammatory response, and platelet aggregation. This chain is Dermonecrotic toxin LsaSicTox-alphaIB2iii, found in Loxosceles sabina (Tucson recluse spider).